A 183-amino-acid chain; its full sequence is Casparian strip membrane protein 2 (183 aa).

At 1–23 (MDSGEQGETSKAPLNKGVSRGVS) the chain is on the cytoplasmic side. A helical membrane pass occupies residues 24–44 (ILDLILRVIAVISTLASAIAM). The Extracellular segment spans residues 45-71 (GTTNETLPLFTPFIQFKARYSDLPALT). An N-linked (GlcNAc...) asparagine glycan is attached at asparagine 48. A helical membrane pass occupies residues 72–92 (FFVVANSIVSAYLILSLPLSI). Over 93-104 (AHIIRSGAKYSR) the chain is Cytoplasmic. A helical transmembrane segment spans residues 105–125 (LVLIIFDAAMLALVTAASSAA). Over 126–158 (TAIVYLAHKGNVRANWLAICQQLDSFCERTSGS) the chain is Extracellular. A helical transmembrane segment spans residues 159–179 (LVGSFGAMVLLILLILLSAMA). At 180 to 183 (LARR) the chain is on the cytoplasmic side.

The protein belongs to the Casparian strip membrane proteins (CASP) family. In terms of assembly, homodimer and heterodimers.

Its subcellular location is the cell membrane. In terms of biological role, regulates membrane-cell wall junctions and localized cell wall deposition. Required for establishment of the Casparian strip membrane domain (CSD) and the subsequent formation of Casparian strips, a cell wall modification of the root endodermis that determines an apoplastic barrier between the intraorganismal apoplasm and the extraorganismal apoplasm and prevents lateral diffusion. The polypeptide is Casparian strip membrane protein 2 (Triticum aestivum (Wheat)).